Here is a 552-residue protein sequence, read N- to C-terminus: Hyaluronan synthase 2 (552 aa).

Residues 1–11 (MYCERFICILR) lie on the Cytoplasmic side of the membrane. The chain crosses the membrane as a helical span at residues 12–32 (ILGTTLFGVSLLLGITAAYIV). The Extracellular segment spans residues 33–45 (GYQFIQTDNYYFS). A helical membrane pass occupies residues 46-66 (FGLYGAILASHLIIQSLFAYL). Topologically, residues 67–374 (EHRKMKRSLE…NAMWFHKHHL (308 aa)) are cytoplasmic. A helical transmembrane segment spans residues 375–395 (WMTYEAVITGFFPFFLIATVI). At 396–402 (QLFYRGK) the chain is on the extracellular side. The chain crosses the membrane as a helical span at residues 403-423 (IWNILLFLLTVQLVGLIKSSF). Residues 424 to 429 (ASFLRG) are Cytoplasmic-facing. Residues 430-450 (NIVMVFMSLYSVLYMSSLLPA) form a helical membrane-spanning segment. At 451 to 475 (KMFAIATINKAGWGTSGRKTIVVNF) the chain is on the extracellular side. The helical transmembrane segment at 476-496 (IGLIPVSIWFTILLGRVIFTI) threads the bilayer. Residues 497–510 (YKESKKPFSESKTT) are Cytoplasmic-facing. Residues 511–531 (VLVIGTILYACYWVLLLTLYL) traverse the membrane as a helical segment. The Extracellular portion of the chain corresponds to 532–552 (VLITKCGRRKKEQHYDMVLDV).

It belongs to the NodC/HAS family. As to quaternary structure, homodimer; dimerization promotes enzymatic activity. Requires Mg(2+) as cofactor.

The protein resides in the cell membrane. The protein localises to the endoplasmic reticulum membrane. It is found in the vesicle. Its subcellular location is the golgi apparatus membrane. It localises to the lysosome. The catalysed reaction is [hyaluronan](n) + UDP-N-acetyl-alpha-D-glucosamine = N-acetyl-beta-D-glucosaminyl-(1-&gt;4)-[hyaluronan](n) + UDP + H(+). It carries out the reaction N-acetyl-beta-D-glucosaminyl-(1-&gt;4)-[hyaluronan](n) + UDP-alpha-D-glucuronate = [hyaluronan](n+1) + UDP + H(+). It participates in glycan biosynthesis; hyaluronan biosynthesis. Catalyzes the addition of GlcNAc or GlcUA monosaccharides to the nascent hyaluronan polymer. Therefore, it is essential to hyaluronan synthesis a major component of most extracellular matrices that has a structural role in tissues architectures and regulates cell adhesion, migration and differentiation. This is one of three isoenzymes responsible for cellular hyaluronan synthesis and it is particularly responsible for the synthesis of high molecular mass hyaluronan. The chain is Hyaluronan synthase 2 (HAS2) from Gallus gallus (Chicken).